Here is a 100-residue protein sequence, read N- to C-terminus: ATP-dependent Clp protease adapter protein ClpS (100 aa).

It belongs to the ClpS family. In terms of assembly, binds to the N-terminal domain of the chaperone ClpA.

Its function is as follows. Involved in the modulation of the specificity of the ClpAP-mediated ATP-dependent protein degradation. This is ATP-dependent Clp protease adapter protein ClpS from Corynebacterium glutamicum (strain R).